The following is a 39-amino-acid chain: Photosystem II reaction center protein X (39 aa).

Residues 11-31 (SLLWGAIVVVIPLSAALLFIS) traverse the membrane as a helical segment.

The protein belongs to the PsbX family. Type 1 subfamily. In terms of assembly, PSII is composed of 1 copy each of membrane proteins PsbA, PsbB, PsbC, PsbD, PsbE, PsbF, PsbH, PsbI, PsbJ, PsbK, PsbL, PsbM, PsbT, PsbX, PsbY, PsbZ, Psb30/Ycf12, at least 3 peripheral proteins of the oxygen-evolving complex and a large number of cofactors. It forms dimeric complexes.

It is found in the plastid. The protein resides in the cyanelle thylakoid membrane. Functionally, involved in the binding and/or turnover of quinones at the Q(B) site of photosystem II (PSII). PSII is a light-driven water plastoquinone oxidoreductase, using light energy to abstract electrons from H(2)O, generating a proton gradient subsequently used for ATP formation. In Cyanophora paradoxa, this protein is Photosystem II reaction center protein X.